Consider the following 645-residue polypeptide: Crossover junction endonuclease mus-81 (645 aa).

2 disordered regions span residues 98-119 (LAAAGAVQDEQPPPPKRARTAR) and 219-310 (GVAG…EDRK). A compositionally biased stretch (polar residues) spans 223 to 252 (SANTSRNAIASGSGTSNPNRSENVNPNRQD). The segment covering 296-305 (DSDDEDPKYD) has biased composition (acidic residues). Positions 353-459 (ELVLDTREVQ…NVVYIIENYN (107 aa)) constitute an ERCC4 domain.

It belongs to the XPF family. In terms of assembly, interacts with eme-1. Mg(2+) is required as a cofactor.

It localises to the nucleus. Its function is as follows. Interacts with eme-1 to form a DNA structure-specific endonuclease with substrate preference for branched DNA structures with a 5'-end at the branch nick. Typical substrates include 3'-flap structures, D-loops, replication forks and nicked Holliday junctions. May be required in mitosis for the processing of stalled or collapsed replication fork intermediates. May be required in meiosis for the repair of meiosis-specific double strand breaks subsequent to single-end invasion (SEI). This Neurospora crassa (strain ATCC 24698 / 74-OR23-1A / CBS 708.71 / DSM 1257 / FGSC 987) protein is Crossover junction endonuclease mus-81 (mus-81).